A 118-amino-acid chain; its full sequence is Small ribosomal subunit protein uS13 (118 aa).

The interval 94-118 (SLPLRGQRTKTNARTRKGPRKPIRK) is disordered.

It belongs to the universal ribosomal protein uS13 family. In terms of assembly, part of the 30S ribosomal subunit. Forms a loose heterodimer with protein S19. Forms two bridges to the 50S subunit in the 70S ribosome.

Located at the top of the head of the 30S subunit, it contacts several helices of the 16S rRNA. In the 70S ribosome it contacts the 23S rRNA (bridge B1a) and protein L5 of the 50S subunit (bridge B1b), connecting the 2 subunits; these bridges are implicated in subunit movement. Contacts the tRNAs in the A and P-sites. The chain is Small ribosomal subunit protein uS13 from Shewanella halifaxensis (strain HAW-EB4).